We begin with the raw amino-acid sequence, 906 residues long: Protein translocase subunit SecA (906 aa).

ATP-binding positions include Gln86, 104–108 (GEGKT), and Asp511. Basic and acidic residues-rich tracts occupy residues 853–865 (HESV…RHDE) and 877–888 (VRREGPKVKRND). A disordered region spans residues 853–906 (HESVIDNNQRHDEDEQEEAPKVQQVRREGPKVKRNDPCPCGSGKKYKQCHGKVE). Residues Cys890, Cys892, Cys901, and His902 each coordinate Zn(2+). Basic residues predominate over residues 896–906 (KKYKQCHGKVE).

This sequence belongs to the SecA family. As to quaternary structure, monomer and homodimer. Part of the essential Sec protein translocation apparatus which comprises SecA, SecYEG and auxiliary proteins SecDF-YajC and YidC. The cofactor is Zn(2+).

The protein resides in the cell inner membrane. The protein localises to the cytoplasm. The catalysed reaction is ATP + H2O + cellular proteinSide 1 = ADP + phosphate + cellular proteinSide 2.. In terms of biological role, part of the Sec protein translocase complex. Interacts with the SecYEG preprotein conducting channel. Has a central role in coupling the hydrolysis of ATP to the transfer of proteins into and across the cell membrane, serving both as a receptor for the preprotein-SecB complex and as an ATP-driven molecular motor driving the stepwise translocation of polypeptide chains across the membrane. The chain is Protein translocase subunit SecA from Francisella tularensis subsp. holarctica (strain OSU18).